The sequence spans 309 residues: 4-hydroxy-3-methylbut-2-enyl diphosphate reductase (309 aa).

Cys12 contacts [4Fe-4S] cluster. 2 residues coordinate (2E)-4-hydroxy-3-methylbut-2-enyl diphosphate: His41 and His74. Residues His41 and His74 each coordinate dimethylallyl diphosphate. The isopentenyl diphosphate site is built by His41 and His74. Cys96 lines the [4Fe-4S] cluster pocket. (2E)-4-hydroxy-3-methylbut-2-enyl diphosphate is bound at residue His124. His124 serves as a coordination point for dimethylallyl diphosphate. His124 lines the isopentenyl diphosphate pocket. Catalysis depends on Glu126, which acts as the Proton donor. Position 167 (Thr167) interacts with (2E)-4-hydroxy-3-methylbut-2-enyl diphosphate. Cys197 lines the [4Fe-4S] cluster pocket. 4 residues coordinate (2E)-4-hydroxy-3-methylbut-2-enyl diphosphate: Ser225, Ser226, Asn227, and Ser269. Residues Ser225, Ser226, Asn227, and Ser269 each contribute to the dimethylallyl diphosphate site. Isopentenyl diphosphate-binding residues include Ser225, Ser226, Asn227, and Ser269.

This sequence belongs to the IspH family. [4Fe-4S] cluster is required as a cofactor.

It carries out the reaction isopentenyl diphosphate + 2 oxidized [2Fe-2S]-[ferredoxin] + H2O = (2E)-4-hydroxy-3-methylbut-2-enyl diphosphate + 2 reduced [2Fe-2S]-[ferredoxin] + 2 H(+). The enzyme catalyses dimethylallyl diphosphate + 2 oxidized [2Fe-2S]-[ferredoxin] + H2O = (2E)-4-hydroxy-3-methylbut-2-enyl diphosphate + 2 reduced [2Fe-2S]-[ferredoxin] + 2 H(+). The protein operates within isoprenoid biosynthesis; dimethylallyl diphosphate biosynthesis; dimethylallyl diphosphate from (2E)-4-hydroxy-3-methylbutenyl diphosphate: step 1/1. Its pathway is isoprenoid biosynthesis; isopentenyl diphosphate biosynthesis via DXP pathway; isopentenyl diphosphate from 1-deoxy-D-xylulose 5-phosphate: step 6/6. In terms of biological role, catalyzes the conversion of 1-hydroxy-2-methyl-2-(E)-butenyl 4-diphosphate (HMBPP) into a mixture of isopentenyl diphosphate (IPP) and dimethylallyl diphosphate (DMAPP). Acts in the terminal step of the DOXP/MEP pathway for isoprenoid precursor biosynthesis. The polypeptide is 4-hydroxy-3-methylbut-2-enyl diphosphate reductase (Pseudoalteromonas translucida (strain TAC 125)).